A 382-amino-acid polypeptide reads, in one-letter code: Queuine tRNA-ribosyltransferase (382 aa).

Catalysis depends on D93, which acts as the Proton acceptor. Substrate is bound by residues D93–F97, D147, Q191, and G218. Residues G249–D255 are RNA binding. D268 acts as the Nucleophile in catalysis. The tract at residues T273–R277 is RNA binding; important for wobble base 34 recognition. C306, C308, C311, and H337 together coordinate Zn(2+).

Belongs to the queuine tRNA-ribosyltransferase family. As to quaternary structure, homodimer. Within each dimer, one monomer is responsible for RNA recognition and catalysis, while the other monomer binds to the replacement base PreQ1. Zn(2+) serves as cofactor.

The catalysed reaction is 7-aminomethyl-7-carbaguanine + guanosine(34) in tRNA = 7-aminomethyl-7-carbaguanosine(34) in tRNA + guanine. It functions in the pathway tRNA modification; tRNA-queuosine biosynthesis. Catalyzes the base-exchange of a guanine (G) residue with the queuine precursor 7-aminomethyl-7-deazaguanine (PreQ1) at position 34 (anticodon wobble position) in tRNAs with GU(N) anticodons (tRNA-Asp, -Asn, -His and -Tyr). Catalysis occurs through a double-displacement mechanism. The nucleophile active site attacks the C1' of nucleotide 34 to detach the guanine base from the RNA, forming a covalent enzyme-RNA intermediate. The proton acceptor active site deprotonates the incoming PreQ1, allowing a nucleophilic attack on the C1' of the ribose to form the product. After dissociation, two additional enzymatic reactions on the tRNA convert PreQ1 to queuine (Q), resulting in the hypermodified nucleoside queuosine (7-(((4,5-cis-dihydroxy-2-cyclopenten-1-yl)amino)methyl)-7-deazaguanosine). This is Queuine tRNA-ribosyltransferase from Actinobacillus pleuropneumoniae serotype 5b (strain L20).